The following is a 417-amino-acid chain: Gamma-glutamyl phosphate reductase (417 aa).

Belongs to the gamma-glutamyl phosphate reductase family.

The protein resides in the cytoplasm. It carries out the reaction L-glutamate 5-semialdehyde + phosphate + NADP(+) = L-glutamyl 5-phosphate + NADPH + H(+). The protein operates within amino-acid biosynthesis; L-proline biosynthesis; L-glutamate 5-semialdehyde from L-glutamate: step 2/2. Its function is as follows. Catalyzes the NADPH-dependent reduction of L-glutamate 5-phosphate into L-glutamate 5-semialdehyde and phosphate. The product spontaneously undergoes cyclization to form 1-pyrroline-5-carboxylate. This chain is Gamma-glutamyl phosphate reductase, found in Hydrogenovibrio crunogenus (strain DSM 25203 / XCL-2) (Thiomicrospira crunogena).